Here is an 803-residue protein sequence, read N- to C-terminus: Phenylalanine--tRNA ligase beta subunit (803 aa).

The tRNA-binding domain occupies 39–151; that stretch reads SMKFSGIKIG…KNAIIGEDIK (113 aa). The region spanning 406 to 482 is the B5 domain; the sequence is PKKILIKLYK…RFYGFEKIPI (77 aa). Residues D466 and D470 each contribute to the Mg(2+) site. Residues 707-800 enclose the FDX-ACB domain; sequence SDIPFNYRDI…LKKNFLIEIR (94 aa).

This sequence belongs to the phenylalanyl-tRNA synthetase beta subunit family. Type 1 subfamily. Tetramer of two alpha and two beta subunits. Mg(2+) is required as a cofactor.

The protein localises to the cytoplasm. It catalyses the reaction tRNA(Phe) + L-phenylalanine + ATP = L-phenylalanyl-tRNA(Phe) + AMP + diphosphate + H(+). The chain is Phenylalanine--tRNA ligase beta subunit from Wigglesworthia glossinidia brevipalpis.